The primary structure comprises 143 residues: Large ribosomal subunit protein uL11 (143 aa).

This sequence belongs to the universal ribosomal protein uL11 family. In terms of assembly, part of the ribosomal stalk of the 50S ribosomal subunit. Interacts with L10 and the large rRNA to form the base of the stalk. L10 forms an elongated spine to which L12 dimers bind in a sequential fashion forming a multimeric L10(L12)X complex. In terms of processing, one or more lysine residues are methylated.

In terms of biological role, forms part of the ribosomal stalk which helps the ribosome interact with GTP-bound translation factors. The protein is Large ribosomal subunit protein uL11 of Treponema denticola (strain ATCC 35405 / DSM 14222 / CIP 103919 / JCM 8153 / KCTC 15104).